Reading from the N-terminus, the 511-residue chain is Putative thymidine phosphorylase 1 (511 aa).

Belongs to the thymidine/pyrimidine-nucleoside phosphorylase family. Type 2 subfamily.

The catalysed reaction is thymidine + phosphate = 2-deoxy-alpha-D-ribose 1-phosphate + thymine. The polypeptide is Putative thymidine phosphorylase 1 (Acidovorax sp. (strain JS42)).